Consider the following 317-residue polypeptide: Porphobilinogen deaminase (317 aa).

Position 245 is an S-(dipyrrolylmethanemethyl)cysteine (Cys-245).

This sequence belongs to the HMBS family. Monomer. Dipyrromethane is required as a cofactor.

The enzyme catalyses 4 porphobilinogen + H2O = hydroxymethylbilane + 4 NH4(+). It functions in the pathway porphyrin-containing compound metabolism; protoporphyrin-IX biosynthesis; coproporphyrinogen-III from 5-aminolevulinate: step 2/4. Its pathway is porphyrin-containing compound metabolism; chlorophyll biosynthesis. In terms of biological role, tetrapolymerization of the monopyrrole PBG into the hydroxymethylbilane pre-uroporphyrinogen in several discrete steps. This is Porphobilinogen deaminase from Parasynechococcus marenigrum (strain WH8102).